A 919-amino-acid chain; its full sequence is Phosphoenolpyruvate carboxylase (919 aa).

Catalysis depends on residues histidine 138 and lysine 579.

Belongs to the PEPCase type 1 family. The cofactor is Mg(2+).

The catalysed reaction is oxaloacetate + phosphate = phosphoenolpyruvate + hydrogencarbonate. Functionally, forms oxaloacetate, a four-carbon dicarboxylic acid source for the tricarboxylic acid cycle. The protein is Phosphoenolpyruvate carboxylase (ppc) of Corynebacterium efficiens (strain DSM 44549 / YS-314 / AJ 12310 / JCM 11189 / NBRC 100395).